Reading from the N-terminus, the 332-residue chain is Fructose-1,6-bisphosphatase class 1 (332 aa).

4 residues coordinate Mg(2+): Glu89, Asp110, Leu112, and Asp113. Residues 113–116 (DGSS), Asn206, Tyr239, 257–259 (YLY), and Lys269 each bind substrate. Glu275 contacts Mg(2+).

The protein belongs to the FBPase class 1 family. In terms of assembly, homotetramer. Mg(2+) serves as cofactor.

It localises to the cytoplasm. It carries out the reaction beta-D-fructose 1,6-bisphosphate + H2O = beta-D-fructose 6-phosphate + phosphate. Its pathway is carbohydrate biosynthesis; gluconeogenesis. In Erwinia tasmaniensis (strain DSM 17950 / CFBP 7177 / CIP 109463 / NCPPB 4357 / Et1/99), this protein is Fructose-1,6-bisphosphatase class 1.